Consider the following 388-residue polypeptide: Protochlorophyllide reductase A, chloroplastic (388 aa).

The N-terminal 74 residues, 1-74 (MALQLLPSTL…KPSGKKTLRQ (74 aa)), are a transit peptide targeting the chloroplast.

Belongs to the short-chain dehydrogenases/reductases (SDR) family. POR subfamily.

Its subcellular location is the plastid. The protein resides in the chloroplast. The catalysed reaction is chlorophyllide a + NADP(+) = protochlorophyllide a + NADPH + H(+). Its pathway is porphyrin-containing compound metabolism; chlorophyll biosynthesis. Functionally, phototransformation of protochlorophyllide (Pchlide) to chlorophyllide (Chlide). This Triticum aestivum (Wheat) protein is Protochlorophyllide reductase A, chloroplastic (PORA).